The following is a 302-amino-acid chain: Dioxygenase ALT11 (302 aa).

Positions 1–22 (MSSPELPSQMGVPNGHTKLQEV) are disordered. H147, D149, and H223 together coordinate Fe cation.

Belongs to the PhyH family. As to quaternary structure, homodimer. The cofactor is Fe cation.

The protein operates within mycotoxin biosynthesis. Its function is as follows. Dioxygenase; part of the gene cluster that mediates the biosynthesis of the host-selective toxins (HSTs) AAL-toxins, sphinganine-analog mycotoxins responsible for Alternaria stem canker on tomato by the tomato pathotype. The biosynthesis starts with the polyketide synthase ALT1-catalyzed C-16 carbon chain assembly from one starter acetyl-CoA unit with malonyl-CoA extender units. ALT1 also selectively transfers methyl groups at the first and the third cycle of chain elongation for AAL toxin. The C-16 polyketide chain is released from the enzyme by a nucleophilic attack of a carbanion, which is derived from R-carbon of glycin by decarboxylation, on the carbonyl carbon of polyketide acyl chain. This step is probably catalyzed by a pyridoxal 5'-phosphate-dependent aminoacyl transferase ALT4. The respective functions of the other enzymes encoded by the cluster have still to be elucidated. The sphingosine N-acyltransferase-like protein ALT7 seems not to act as a resistance/self-tolerance factor against the toxin in the toxin biosynthetic gene cluster, contrary to what is expected. The polypeptide is Dioxygenase ALT11 (Alternaria alternata (Alternaria rot fungus)).